A 172-amino-acid chain; its full sequence is ATP synthase subunit b (172 aa).

The helical transmembrane segment at 12–32 threads the bilayer; it reads VGFNAGTMLFQLVAMLILLAL.

Belongs to the ATPase B chain family. In terms of assembly, F-type ATPases have 2 components, F(1) - the catalytic core - and F(0) - the membrane proton channel. F(1) has five subunits: alpha(3), beta(3), gamma(1), delta(1), epsilon(1). F(0) has three main subunits: a(1), b(2) and c(10-14). The alpha and beta chains form an alternating ring which encloses part of the gamma chain. F(1) is attached to F(0) by a central stalk formed by the gamma and epsilon chains, while a peripheral stalk is formed by the delta and b chains.

The protein resides in the cell membrane. Functionally, f(1)F(0) ATP synthase produces ATP from ADP in the presence of a proton or sodium gradient. F-type ATPases consist of two structural domains, F(1) containing the extramembraneous catalytic core and F(0) containing the membrane proton channel, linked together by a central stalk and a peripheral stalk. During catalysis, ATP synthesis in the catalytic domain of F(1) is coupled via a rotary mechanism of the central stalk subunits to proton translocation. Component of the F(0) channel, it forms part of the peripheral stalk, linking F(1) to F(0). This is ATP synthase subunit b from Bacillus licheniformis (strain ATCC 14580 / DSM 13 / JCM 2505 / CCUG 7422 / NBRC 12200 / NCIMB 9375 / NCTC 10341 / NRRL NRS-1264 / Gibson 46).